Consider the following 449-residue polypeptide: MHSQQRPNPQMNRHPYGTPGSAPQMRRPGGFAGQPPQMHGPRMVAPPAAPLPKKKKYADKCIHPKIRELEPDAENYMALLASEQKLDSTLSRKKLDIQEALKRPSKVKKRLRIYISHTFIEEKQPEKDTDEASLPMWELRVEGRLLDEQPPAPAIPGQRPVPKRKFSSFFKSLVIELDKEMYGPDQHLVEWHRTPQTNETDGFQVKRAGDRPVKCRILLLLDNHPAKFKLHPRLAKVLGIATETRPKIIEALWQYIKTHGLQDPQERDIINCDTFLSQCFGVNRMRFMEVPNKLHQLLQQTDPLEFNHIIQRPKEGQEQVSTCYDIDVEMEDPVKQFMHTFVHSPGLANDIQTLDQKCYDIIEQINELKTRRDFYARFYTEPAEFIKSWVMSQNSDLKTMNELSGDLEAERFAESYVRPETEEGVQRYMFQKVNQKRHELEQSLGVRSN.

Residues 1–11 (MHSQQRPNPQM) show a composition bias toward polar residues. Residues 1–56 (MHSQQRPNPQMNRHPYGTPGSAPQMRRPGGFAGQPPQMHGPRMVAPPAAPLPKKKK) are disordered. Positions 223 to 300 (NHPAKFKLHP…PNKLHQLLQQ (78 aa)) constitute an SWIB/MDM2 domain.

This sequence belongs to the SMARCD family. As to quaternary structure, component of the multiprotein chromatin-remodeling complexes SWI/SNF: SWI/SNF-A (BAF), SWI/SNF-B (PBAF) and related complexes. The canonical complex contains a catalytic subunit swsn-4, core subunits swsn-1 and swsn-5, and accessory subunits swsn-3, swsn-6, phf-10, dpff-1, swsn-9 and either ham-3/swsn-2.1 or swsn-2.2.

It localises to the nucleus. The protein resides in the nucleoplasm. Its subcellular location is the chromosome. It is found in the nucleus envelope. In terms of biological role, involved in transcriptional activation and repression of select genes by chromatin remodeling (alteration of DNA-nucleosome topology). Component of SWI/SNF chromatin remodeling complexes that carry out key enzymatic activities, changing chromatin structure by altering DNA-histone contacts within a nucleosome in an ATP-dependent manner. Probably regulates vulva development through the let-60/Ras pathway. Involved in nuclear reassembly after mitosis and recruitment of nuclear envelope protein, mel-28, to the nuclear periphery in the early embryo and in the adult germline. Involved in gonadogenesis. The polypeptide is SWI/SNF chromatin-remodeling accessory subunit 2 (Caenorhabditis elegans).